The sequence spans 170 residues: Glycine cleavage system H protein, mitochondrial (170 aa).

The transit peptide at 1–45 directs the protein to the mitochondrion; that stretch reads MSLRVVRSVRAVACSLRIALASCPPRPWAPSAAAVRSLRTGSALL. The Lipoyl-binding domain occupies 63–145; that stretch reads IGTVGISNFA…YEDGWLIKMT (83 aa). K104 is subject to N6-lipoyllysine.

Belongs to the GcvH family. In terms of assembly, the glycine cleavage system is composed of four proteins: P (GLDC), T (GCST), L (DLD) and H (GCSH). Interacts with GLDC. (R)-lipoate serves as cofactor.

The protein resides in the mitochondrion. In terms of biological role, the glycine cleavage system catalyzes the degradation of glycine. The H protein (GCSH) shuttles the methylamine group of glycine from the P protein (GLDC) to the T protein (GCST). Has a pivotal role in the lipoylation of enzymes involved in cellular energetics such as the mitochondrial dihydrolipoyllysine-residue acetyltransferase component of pyruvate dehydrogenase complex (DLAT), and the mitochondrial dihydrolipoyllysine-residue succinyltransferase component of 2-oxoglutarate dehydrogenase complex (DLST). The protein is Glycine cleavage system H protein, mitochondrial of Rattus norvegicus (Rat).